The sequence spans 204 residues: Large ribosomal subunit protein uL4 (204 aa).

The interval 49–76 (KTKGISDVSGTTAKPYGQKRTGRARQGS) is disordered.

The protein belongs to the universal ribosomal protein uL4 family. Part of the 50S ribosomal subunit.

Its function is as follows. One of the primary rRNA binding proteins, this protein initially binds near the 5'-end of the 23S rRNA. It is important during the early stages of 50S assembly. It makes multiple contacts with different domains of the 23S rRNA in the assembled 50S subunit and ribosome. Functionally, forms part of the polypeptide exit tunnel. The protein is Large ribosomal subunit protein uL4 of Wolbachia pipientis wMel.